We begin with the raw amino-acid sequence, 506 residues long: MSGVSSGEVLKILRERIENFGGPVKAGSVGEVLSVKDGIAVVYGLHGAGFGETVAFASGVRGVISGLESDIASVVIFGEDREVKEGDSVECTGELMKVPVGFSLLGRVVSPLGMPLDGEGAISGCDGENPVEVKAPGIMARQPVSEPLQTGIKTIDMLIPIGRGQRELIIGDRKTGKTAIALDTIINQKRYNDRAASEKDKVYCIYVAIGQKNSSIARVVSKLCEAGAADYTIVVATGASDSVPLQYLAPYAACAMGEFFRDNGMHCLIVYDDLSKHAVAYRQMSLLLRRPPGREAYPGDVFYIHSRLLERAAKLSDALGGGSLTALPIIETQAGDVSAYIPTNVISITDGQIFLESELFHKGFRPAINVGLSVSRVGSAAQVKAVKKVAGSMKLSLAQYRELEDFARFGSDLDASSQAMLEKGRRMIELLKQGQYSPLSVEEQVAVMLAGSDSCIDAIPVGDMCRFERGLLEKLRIDHGDLMACLLEDDVRSKLLEVIRGFAVSF.

171–178 (GDRKTGKT) lines the ATP pocket.

Belongs to the ATPase alpha/beta chains family. As to quaternary structure, F-type ATPases have 2 components, CF(1) - the catalytic core - and CF(0) - the membrane proton channel. CF(1) has five subunits: alpha(3), beta(3), gamma(1), delta(1), epsilon(1). CF(0) has three main subunits: a(1), b(2) and c(9-12). The alpha and beta chains form an alternating ring which encloses part of the gamma chain. CF(1) is attached to CF(0) by a central stalk formed by the gamma and epsilon chains, while a peripheral stalk is formed by the delta and b chains.

It is found in the cell inner membrane. The catalysed reaction is ATP + H2O + 4 H(+)(in) = ADP + phosphate + 5 H(+)(out). In terms of biological role, produces ATP from ADP in the presence of a proton gradient across the membrane. The alpha chain is a regulatory subunit. The polypeptide is ATP synthase subunit alpha (Anaplasma phagocytophilum (strain HZ)).